The chain runs to 537 residues: CTP synthase (537 aa).

The tract at residues 1-268 (MSFKCIFLTG…STFITEKLGL (268 aa)) is amidoligase domain. Serine 14 lines the CTP pocket. Serine 14 is a UTP binding site. Residue 15-20 (SLGKGL) participates in ATP binding. Tyrosine 55 provides a ligand contact to L-glutamine. Position 72 (aspartate 72) interacts with ATP. Residues aspartate 72 and glutamate 142 each coordinate Mg(2+). Residues 149-151 (DIE), 188-193 (KTKPTQ), and lysine 224 contribute to the CTP site. UTP-binding positions include 188–193 (KTKPTQ) and lysine 224. In terms of domain architecture, Glutamine amidotransferase type-1 spans 294-533 (RLGLVGKYVQ…IEAALLHSRN (240 aa)). Glycine 353 lines the L-glutamine pocket. Catalysis depends on cysteine 380, which acts as the Nucleophile; for glutamine hydrolysis. Residues 381–384 (LGMQ), glutamate 404, and arginine 461 each bind L-glutamine. Residues histidine 506 and glutamate 508 contribute to the active site.

Belongs to the CTP synthase family. As to quaternary structure, homotetramer.

The enzyme catalyses UTP + L-glutamine + ATP + H2O = CTP + L-glutamate + ADP + phosphate + 2 H(+). The catalysed reaction is L-glutamine + H2O = L-glutamate + NH4(+). It catalyses the reaction UTP + NH4(+) + ATP = CTP + ADP + phosphate + 2 H(+). Its pathway is pyrimidine metabolism; CTP biosynthesis via de novo pathway; CTP from UDP: step 2/2. With respect to regulation, allosterically activated by GTP, when glutamine is the substrate; GTP has no effect on the reaction when ammonia is the substrate. The allosteric effector GTP functions by stabilizing the protein conformation that binds the tetrahedral intermediate(s) formed during glutamine hydrolysis. Inhibited by the product CTP, via allosteric rather than competitive inhibition. Functionally, catalyzes the ATP-dependent amination of UTP to CTP with either L-glutamine or ammonia as the source of nitrogen. Regulates intracellular CTP levels through interactions with the four ribonucleotide triphosphates. The protein is CTP synthase of Chlamydia abortus (strain DSM 27085 / S26/3) (Chlamydophila abortus).